A 143-amino-acid polypeptide reads, in one-letter code: Nucleoside diphosphate kinase (143 aa).

6 residues coordinate ATP: lysine 11, phenylalanine 59, arginine 87, threonine 93, arginine 104, and asparagine 114. The active-site Pros-phosphohistidine intermediate is the histidine 117.

Belongs to the NDK family. In terms of assembly, homotetramer. Mg(2+) serves as cofactor.

Its subcellular location is the cytoplasm. It catalyses the reaction a 2'-deoxyribonucleoside 5'-diphosphate + ATP = a 2'-deoxyribonucleoside 5'-triphosphate + ADP. The catalysed reaction is a ribonucleoside 5'-diphosphate + ATP = a ribonucleoside 5'-triphosphate + ADP. Major role in the synthesis of nucleoside triphosphates other than ATP. The ATP gamma phosphate is transferred to the NDP beta phosphate via a ping-pong mechanism, using a phosphorylated active-site intermediate. This is Nucleoside diphosphate kinase from Clostridium perfringens (strain SM101 / Type A).